The following is a 671-amino-acid chain: tRNA 5-methylaminomethyl-2-thiouridine biosynthesis bifunctional protein MnmC (671 aa).

The tRNA (mnm(5)s(2)U34)-methyltransferase stretch occupies residues 1–245 (MVNVMNTLSF…KREMLWGEKP (245 aa)). Positions 272–671 (VGGGVASLFV…RKLLKGSKVE (400 aa)) are FAD-dependent cmnm(5)s(2)U34 oxidoreductase.

In the N-terminal section; belongs to the methyltransferase superfamily. tRNA (mnm(5)s(2)U34)-methyltransferase family. The protein in the C-terminal section; belongs to the DAO family. It depends on FAD as a cofactor.

The protein localises to the cytoplasm. The enzyme catalyses 5-aminomethyl-2-thiouridine(34) in tRNA + S-adenosyl-L-methionine = 5-methylaminomethyl-2-thiouridine(34) in tRNA + S-adenosyl-L-homocysteine + H(+). Its function is as follows. Catalyzes the last two steps in the biosynthesis of 5-methylaminomethyl-2-thiouridine (mnm(5)s(2)U) at the wobble position (U34) in tRNA. Catalyzes the FAD-dependent demodification of cmnm(5)s(2)U34 to nm(5)s(2)U34, followed by the transfer of a methyl group from S-adenosyl-L-methionine to nm(5)s(2)U34, to form mnm(5)s(2)U34. The chain is tRNA 5-methylaminomethyl-2-thiouridine biosynthesis bifunctional protein MnmC from Actinobacillus pleuropneumoniae serotype 3 (strain JL03).